Consider the following 159-residue polypeptide: 17 kDa surface antigen (159 aa).

A signal peptide spans 1 to 19 (MKLLSKIMIIALAASMLQA). The N-palmitoyl cysteine moiety is linked to residue C20. Residue C20 is the site of S-diacylglycerol cysteine attachment.

This sequence belongs to the rickettsiale 17 kDa surface antigen family.

It is found in the cell outer membrane. The sequence is that of 17 kDa surface antigen (omp) from Rickettsia prowazekii (strain Madrid E).